A 303-amino-acid chain; its full sequence is RELT-like protein 2 (303 aa).

A helical membrane pass occupies residues L15 to I35. 2 disordered regions span residues C46 to M67 and S111 to V303. S52 carries the post-translational modification Phosphoserine. Composition is skewed to basic and acidic residues over residues R148–P158 and T172–P188. Over residues G194–P212 the composition is skewed to gly residues.

Belongs to the RELT family. As to quaternary structure, interacts with RELT, RELL1, OXSR1, PLSCR1 and TRAF2.

The protein localises to the cell membrane. Its function is as follows. Induces activation of MAPK14/p38 cascade, when overexpressed. Induces apoptosis, when overexpressed. This Bos taurus (Bovine) protein is RELT-like protein 2 (RELL2).